The primary structure comprises 91 residues: Elongation factor 1-beta (91 aa).

As to quaternary structure, homodimer.

Functionally, promotes the exchange of GDP for GTP in EF-1-alpha/GDP, thus allowing the regeneration of EF-1-alpha/GTP that could then be used to form the ternary complex EF-1-alpha/GTP/AAtRNA. The protein is Elongation factor 1-beta (ef1b) of Saccharolobus solfataricus (strain ATCC 35092 / DSM 1617 / JCM 11322 / P2) (Sulfolobus solfataricus).